The following is an 845-amino-acid chain: Translation initiation factor IF-2 (845 aa).

Disordered stretches follow at residues Arg-45–Ser-91 and Glu-127–Val-209. The segment covering Ser-81–Ser-91 has biased composition (polar residues). The segment covering Thr-137–Asn-149 has biased composition (basic and acidic residues). Polar residues predominate over residues Pro-151–Ser-162. The span at Thr-179 to His-193 shows a compositional bias: basic and acidic residues. Residues Pro-343 to Lys-512 form the tr-type G domain. Positions Gly-352–Thr-359 are G1. Residue Gly-352–Thr-359 participates in GTP binding. The tract at residues Gly-377–His-381 is G2. Residues Asp-398–Gly-401 are G3. Residues Asp-398–His-402 and Asn-452–Asp-455 each bind GTP. A G4 region spans residues Asn-452 to Asp-455. A G5 region spans residues Ser-488–Lys-490.

The protein belongs to the TRAFAC class translation factor GTPase superfamily. Classic translation factor GTPase family. IF-2 subfamily.

Its subcellular location is the cytoplasm. Functionally, one of the essential components for the initiation of protein synthesis. Protects formylmethionyl-tRNA from spontaneous hydrolysis and promotes its binding to the 30S ribosomal subunits. Also involved in the hydrolysis of GTP during the formation of the 70S ribosomal complex. The chain is Translation initiation factor IF-2 from Bartonella quintana (strain Toulouse) (Rochalimaea quintana).